Consider the following 138-residue polypeptide: Trypsin inhibitor DE5 alpha chain (138 aa).

A disulfide bridge connects residues C40 and C86.

It belongs to the protease inhibitor I3 (leguminous Kunitz-type inhibitor) family. Heterodimer of an alpha and a beta chain linked by a disulfide bond.

Its function is as follows. Inhibition of trypsin. The chain is Trypsin inhibitor DE5 alpha chain from Adenanthera pavonina (Sandal bead tree).